We begin with the raw amino-acid sequence, 318 residues long: Ribosomal RNA small subunit methyltransferase H (318 aa).

S-adenosyl-L-methionine contacts are provided by residues 38-40, Asp-57, Leu-91, Asp-105, and Gln-112; that span reads AGH.

Belongs to the methyltransferase superfamily. RsmH family.

It localises to the cytoplasm. The catalysed reaction is cytidine(1402) in 16S rRNA + S-adenosyl-L-methionine = N(4)-methylcytidine(1402) in 16S rRNA + S-adenosyl-L-homocysteine + H(+). In terms of biological role, specifically methylates the N4 position of cytidine in position 1402 (C1402) of 16S rRNA. In Clavibacter michiganensis subsp. michiganensis (strain NCPPB 382), this protein is Ribosomal RNA small subunit methyltransferase H.